The sequence spans 509 residues: Proton-gated ion channel subunit pbo-5 (509 aa).

Positions 1-21 (MTRLSILQHLLTFLILSKINA) are cleaved as a signal peptide. Residues 22–275 (TSTTESYFDS…ISLKRRPLFY (254 aa)) lie on the Extracellular side of the membrane. Cysteine 193 and cysteine 207 form a disulfide bridge. 3 helical membrane-spanning segments follow: residues 276–296 (MVTL…GLFA), 310–330 (LGVT…EKVP), and 336–356 (VPLL…AAMT). The Cytoplasmic segment spans residues 357–487 (TGIVMKVHRL…GYVRISERLD (131 aa)). Residues 488–508 (ILFMFLFLSTVTIPVAVLFYL) form a helical membrane-spanning segment.

It belongs to the ligand-gated ion channel (TC 1.A.9) family. Acetylcholine receptor (TC 1.A.9.1) subfamily. As to quaternary structure, the functional channel is a heterooligomer of pbo-5 and pbo-6. May self-associate to form homooligomers with negligible ion channel activity. As to expression, expressed in the posterior body muscles. Also detected in the RIFL, RIFR and RIS head neurons.

Its subcellular location is the membrane. Its function is as follows. Forms a proton-gated ion channel with pbo-6 that is activated by acidification of the posterior coelomic space, leading to posterior body wall muscle contraction (pBoc) during the defecation cycle. Probably by regulating the defecation motor program, required for fatty acid uptake by intestinal cells. Does not bind neurotransmitters such as acetylcholine, gamma-aminobutyric acid, glycine, serotonin, glutamate or choline. This chain is Proton-gated ion channel subunit pbo-5, found in Caenorhabditis elegans.